A 298-amino-acid polypeptide reads, in one-letter code: Multifunctional dioxygenase ausE (298 aa).

Residues Arg-72 and Gln-127 each contribute to the substrate site. 2 residues coordinate Fe cation: His-130 and Asp-132. Residue Thr-167 participates in substrate binding. His-214 is a Fe cation binding site. Residue Arg-226 coordinates substrate.

This sequence belongs to the PhyH family. In terms of assembly, homodimer. The cofactor is Fe cation.

It catalyses the reaction preaustinoid A1 + 2-oxoglutarate + O2 = preaustinoid A2 + succinate + CO2 + H2O. The catalysed reaction is preaustinoid A2 + 2-oxoglutarate + O2 = preaustinoid A3 + succinate + CO2 + H2O. It carries out the reaction berkeleyone A + 2-oxoglutarate + O2 = preaustinoid A + succinate + CO2 + H2O. The protein operates within secondary metabolite biosynthesis; terpenoid biosynthesis. Functionally, multifunctional dioxygenase; part of the gene cluster that mediates the biosynthesis of calidodehydroaustin, a fungal meroterpenoid. The first step of the pathway is the synthesis of 3,5-dimethylorsellinic acid by the polyketide synthase ausA. 3,5-dimethylorsellinic acid is then prenylated by the polyprenyl transferase ausN. Further epoxidation by the FAD-dependent monooxygenase ausM and cyclization by the probable terpene cyclase ausL lead to the formation of protoaustinoid A. Protoaustinoid A is then oxidized to spiro-lactone preaustinoid A3 by the combined action of the FAD-binding monooxygenases ausB and ausC, and the dioxygenase ausE. Acid-catalyzed keto-rearrangement and ring contraction of the tetraketide portion of preaustinoid A3 by ausJ lead to the formation of preaustinoid A4. The aldo-keto reductase ausK, with the help of ausH, is involved in the next step by transforming preaustinoid A4 into isoaustinone which is in turn hydroxylated by the P450 monooxygenase ausI to form austinolide. The cytochrome P450 monooxygenase ausG modifies austinolide to austinol. Austinol is further acetylated to austin by the O-acetyltransferase ausP, which spontaneously changes to dehydroaustin. The cytochrome P450 monooxygenase ausR then converts dehydroaustin is into 7-dehydrodehydroaustin. The hydroxylation catalyzed by ausR permits the O-acetyltransferase ausQ to add an additional acetyl group to the molecule, leading to the formation of acetoxydehydroaustin. The short chain dehydrogenase ausT catalyzes the reduction of the double bond present between carbon atoms 1 and 2 to convert 7-dehydrodehydroaustin into 1,2-dihydro-7-hydroxydehydroaustin. AusQ catalyzes not only an acetylation reaction but also the addition of the PKS ausV diketide product to 1,2-dihydro-7-hydroxydehydroaustin, forming precalidodehydroaustin. Finally, the iron/alpha-ketoglutarate-dependent dioxygenase converts precalidodehydroaustin into calidodehydroaustin. This chain is Multifunctional dioxygenase ausE, found in Aspergillus calidoustus.